We begin with the raw amino-acid sequence, 317 residues long: Metaxin-1 (317 aa).

Residues lysine 38, lysine 41, lysine 78, and lysine 168 each participate in a glycyl lysine isopeptide (Lys-Gly) (interchain with G-Cter in ubiquitin) cross-link. The helical transmembrane segment at 272 to 292 (ILSVLAGLAAMVGYALLSGIV) threads the bilayer.

This sequence belongs to the metaxin family. Interacts with MTX2/metaxin-2. Associates with the mitochondrial contact site and cristae organizing system (MICOS) complex, composed of at least MICOS10/MIC10, CHCHD3/MIC19, CHCHD6/MIC25, APOOL/MIC27, IMMT/MIC60, APOO/MIC23/MIC26 and QIL1/MIC13. This complex was also known under the names MINOS or MitOS complex. The MICOS complex associates with mitochondrial outer membrane proteins SAMM50, MTX1 and MTX2 (together described as components of the mitochondrial outer membrane sorting assembly machinery (SAM) complex) and DNAJC11, mitochondrial inner membrane protein TMEM11 and with HSPA9. The MICOS and SAM complexes together with DNAJC11 are part of a large protein complex spanning both membranes termed the mitochondrial intermembrane space bridging (MIB) complex. Interacts with ARMC1. Ubiquitinated by PRKN during mitophagy, leading to its degradation and enhancement of mitophagy. Deubiquitinated by USP30. In terms of tissue distribution, ubiquitous. Higher levels are seen in the kidney as compared to other tissues.

The protein localises to the mitochondrion outer membrane. In terms of biological role, involved in transport of proteins into the mitochondrion. Essential for embryonic development. The sequence is that of Metaxin-1 (Mtx1) from Mus musculus (Mouse).